The chain runs to 67 residues: MPQLDTSTWFINIVSMILTLFIVFQLKISKHSYPMHPEAKTTKMAKRLTPWESKWTKIYSPLSLPQQ.

The chain crosses the membrane as a helical span at residues 8–24 (TWFINIVSMILTLFIVF). Position 54 is an N6-acetyllysine; alternate (lysine 54). An N6-succinyllysine; alternate modification is found at lysine 54. An N6-acetyllysine modification is found at lysine 57.

This sequence belongs to the ATPase protein 8 family. In terms of assembly, component of the ATP synthase complex composed at least of ATP5F1A/subunit alpha, ATP5F1B/subunit beta, ATP5MC1/subunit c (homooctomer), MT-ATP6/subunit a, MT-ATP8/subunit 8, ATP5ME/subunit e, ATP5MF/subunit f, ATP5MG/subunit g, ATP5MK/subunit k, ATP5MJ/subunit j, ATP5F1C/subunit gamma, ATP5F1D/subunit delta, ATP5F1E/subunit epsilon, ATP5PF/subunit F6, ATP5PB/subunit b, ATP5PD/subunit d, ATP5PO/subunit OSCP. ATP synthase complex consists of a soluble F(1) head domain (subunits alpha(3) and beta(3)) - the catalytic core - and a membrane F(0) domain - the membrane proton channel (subunits c, a, 8, e, f, g, k and j). These two domains are linked by a central stalk (subunits gamma, delta, and epsilon) rotating inside the F1 region and a stationary peripheral stalk (subunits F6, b, d, and OSCP). Interacts with PRICKLE3.

The protein localises to the mitochondrion membrane. Its function is as follows. Subunit 8, of the mitochondrial membrane ATP synthase complex (F(1)F(0) ATP synthase or Complex V) that produces ATP from ADP in the presence of a proton gradient across the membrane which is generated by electron transport complexes of the respiratory chain. ATP synthase complex consist of a soluble F(1) head domain - the catalytic core - and a membrane F(1) domain - the membrane proton channel. These two domains are linked by a central stalk rotating inside the F(1) region and a stationary peripheral stalk. During catalysis, ATP synthesis in the catalytic domain of F(1) is coupled via a rotary mechanism of the central stalk subunits to proton translocation. In vivo, can only synthesize ATP although its ATP hydrolase activity can be activated artificially in vitro. Part of the complex F(0) domain. The polypeptide is ATP synthase F(0) complex subunit 8 (Equus asinus (Donkey)).